The primary structure comprises 197 residues: MKPMHPGGFLEVITGPMFAGKTTELIKRVERQIFAKRKAALFKPAIDNRYSEREVVAHNGLRYEAFVVPTTEKGVERIKEITLNEGYEVIGIDEVQFFPMSVVEALNELADQGIYVIASGLNLDFKGDPFPVTKELLVRADNIVYLTAVCTVCGKPATRSQRLIDGKPAPRNSPVILVGGRESYEARCREHHLVPDE.

Residues 15–22 (GPMFAGKT) and 93–96 (DEVQ) each bind ATP. Residue E94 is the Proton acceptor of the active site. C150, C153, C188, and H191 together coordinate Zn(2+).

This sequence belongs to the thymidine kinase family. As to quaternary structure, homotetramer.

It localises to the cytoplasm. The catalysed reaction is thymidine + ATP = dTMP + ADP + H(+). This Thermococcus kodakarensis (strain ATCC BAA-918 / JCM 12380 / KOD1) (Pyrococcus kodakaraensis (strain KOD1)) protein is Thymidine kinase.